A 476-amino-acid chain; its full sequence is Adenylosuccinate synthetase, chloroplastic (476 aa).

Positions 1–20 (AAAAAGRGRSFSPAAPAPSS) are enriched in low complexity. Residues 1 to 34 (AAAAAGRGRSFSPAAPAPSSVRLPGRQAPAPAAA) are disordered. GTP-binding positions include 63 to 69 (GDEGKGK) and 91 to 93 (GHT). The active-site Proton acceptor is the Asp-64. Mg(2+) is bound by residues Asp-64 and Gly-91. IMP-binding positions include 64 to 67 (DEGK), 89 to 92 (NAGH), Thr-181, Arg-195, Gln-275, Thr-290, and Arg-354. His-92 (proton donor) is an active-site residue. Position 350-356 (350-356 (TTTGRPR)) interacts with substrate. Residues Arg-356, 382-384 (KLD), and 465-467 (GVG) contribute to the GTP site.

The protein belongs to the adenylosuccinate synthetase family. Homodimer. Mg(2+) is required as a cofactor.

It localises to the plastid. It is found in the chloroplast. The enzyme catalyses IMP + L-aspartate + GTP = N(6)-(1,2-dicarboxyethyl)-AMP + GDP + phosphate + 2 H(+). Its pathway is purine metabolism; AMP biosynthesis via de novo pathway; AMP from IMP: step 1/2. Plays an important role in the de novo pathway and in the salvage pathway of purine nucleotide biosynthesis. Catalyzes the first committed step in the biosynthesis of AMP from IMP. The polypeptide is Adenylosuccinate synthetase, chloroplastic (Triticum aestivum (Wheat)).